A 246-amino-acid chain; its full sequence is 1-(5-phosphoribosyl)-5-[(5-phosphoribosylamino)methylideneamino] imidazole-4-carboxamide isomerase (246 aa).

Aspartate 12 functions as the Proton acceptor in the catalytic mechanism. Aspartate 134 functions as the Proton donor in the catalytic mechanism.

The protein belongs to the HisA/HisF family.

Its subcellular location is the cytoplasm. The catalysed reaction is 1-(5-phospho-beta-D-ribosyl)-5-[(5-phospho-beta-D-ribosylamino)methylideneamino]imidazole-4-carboxamide = 5-[(5-phospho-1-deoxy-D-ribulos-1-ylimino)methylamino]-1-(5-phospho-beta-D-ribosyl)imidazole-4-carboxamide. The protein operates within amino-acid biosynthesis; L-histidine biosynthesis; L-histidine from 5-phospho-alpha-D-ribose 1-diphosphate: step 4/9. The sequence is that of 1-(5-phosphoribosyl)-5-[(5-phosphoribosylamino)methylideneamino] imidazole-4-carboxamide isomerase from Psychrobacter cryohalolentis (strain ATCC BAA-1226 / DSM 17306 / VKM B-2378 / K5).